The following is a 197-amino-acid chain: 7-methyl-GTP pyrophosphatase (197 aa).

Asp-79 serves as the catalytic Proton acceptor.

The protein belongs to the Maf family. YceF subfamily.

It is found in the cytoplasm. The catalysed reaction is N(7)-methyl-GTP + H2O = N(7)-methyl-GMP + diphosphate + H(+). Nucleoside triphosphate pyrophosphatase that hydrolyzes 7-methyl-GTP (m(7)GTP). May have a dual role in cell division arrest and in preventing the incorporation of modified nucleotides into cellular nucleic acids. In Dictyostelium discoideum (Social amoeba), this protein is 7-methyl-GTP pyrophosphatase.